A 282-amino-acid polypeptide reads, in one-letter code: Bifunctional protein FolD (282 aa).

Residues 164–166 (GRS) and serine 189 each bind NADP(+).

It belongs to the tetrahydrofolate dehydrogenase/cyclohydrolase family. As to quaternary structure, homodimer.

It catalyses the reaction (6R)-5,10-methylene-5,6,7,8-tetrahydrofolate + NADP(+) = (6R)-5,10-methenyltetrahydrofolate + NADPH. It carries out the reaction (6R)-5,10-methenyltetrahydrofolate + H2O = (6R)-10-formyltetrahydrofolate + H(+). It functions in the pathway one-carbon metabolism; tetrahydrofolate interconversion. Its function is as follows. Catalyzes the oxidation of 5,10-methylenetetrahydrofolate to 5,10-methenyltetrahydrofolate and then the hydrolysis of 5,10-methenyltetrahydrofolate to 10-formyltetrahydrofolate. The sequence is that of Bifunctional protein FolD from Streptococcus suis (strain 98HAH33).